Here is a 299-residue protein sequence, read N- to C-terminus: Large ribosomal subunit protein uL29m (299 aa).

The protein belongs to the universal ribosomal protein uL29 family. As to quaternary structure, component of the mitochondrial large ribosomal subunit. Mature mitochondrial ribosomes consist of a small (37S) and a large (54S) subunit. The 37S subunit contains at least 33 different proteins and 1 molecule of RNA (15S). The 54S subunit contains at least 45 different proteins and 1 molecule of RNA (21S).

The protein localises to the mitochondrion. The chain is Large ribosomal subunit protein uL29m (MRPL4) from Scheffersomyces stipitis (strain ATCC 58785 / CBS 6054 / NBRC 10063 / NRRL Y-11545) (Yeast).